The chain runs to 398 residues: MASSSSAAALWTAAPHPHGSCIRIHAIFHQRHQRRGRRPVVVASSVRPLQAASLAVATAPVAVASRRTAAEEAVYEVVLRQAALVEEATHRRGAGAPRWAEEDAVDWGLLLGDAYHRCGEVCAEYAKTFYLGTQLMTPERRKAVWAIYVWCRRTDELVDGPNSSYITPKALDRWEKRLEDLFEGRPYDMYDAALSDTVSKFPVDIQPFKDMIEGMRLDLWKSRYRSFDELYLYCYYVAGTVGLMTVPVMGIAPDSKASTESVYNAALALGIANQLTNILRDVGEDSRRGRIYLPLDELAEAGLTEEDIFRGKVTDKWRKFMKGQILRARLFFDEAEKGVAHLDSASRWPVLASLWLYRQILDAIEANDYNNFTKRAYVNKAKKLLSLPVAYARAAVAS.

A chloroplast-targeting transit peptide spans 1–80 (MASSSSAAAL…EEAVYEVVLR (80 aa)).

Belongs to the phytoene/squalene synthase family. As to expression, expressed in leaves and endosperm. Expressed in developing leaves.

It localises to the plastid. Its subcellular location is the chloroplast membrane. The protein resides in the chloroplast. The protein localises to the plastoglobule. The enzyme catalyses 2 (2E,6E,10E)-geranylgeranyl diphosphate = 15-cis-phytoene + 2 diphosphate. Functionally, catalyzes the conversion of geranylgeranyl diphosphate to phytoene. Mediates the first committed step in carotenoid biosynthesis. This Oryza sativa subsp. japonica (Rice) protein is Phytoene synthase 2, chloroplastic.